The primary structure comprises 557 residues: TNF receptor-associated factor 5 (557 aa).

The segment at 45–85 (CAFCHSVLHNPHQTGCGHRFCQHCILSLRELNTVPICPVDK) adopts an RING-type zinc-finger fold. 2 consecutive TRAF-type zinc fingers follow at residues 127-181 (DHLQ…INLQ) and 182-239 (NHEE…RNLQ). Positions 237–342 (NLQQHEHSAL…VNQQQNKFDL (106 aa)) form a coiled coil. A Glycyl lysine isopeptide (Lys-Gly) (interchain with G-Cter in ubiquitin) cross-link involves residue K318. The tract at residues 345 to 557 (LMEAVDTVKQ…AVDLTDLEDL (213 aa)) is interaction with EIF2AK2/PKR. Residues 403-549 (NGKLIWKVTD…DDTLFLKVAV (147 aa)) form the MATH domain.

This sequence belongs to the TNF receptor-associated factor family. A subfamily. As to quaternary structure, homotrimer. Heteromer with TRAF3. Associates with TNFRSF5/CD40 through interaction with TRAF3. Associates with LTBR/TNFRSF3, TNFRSF4, TNFRSF8/CD30, TNFRSF11A/RANK, TNFRSF13B/TACI, TNFRSF14, TNFRSF17, TNFRSF19/TROY, RIPK2, MAP3K14, MAP3K5, and TRAF and TNF receptor associated protein TDP2. Interacts (via C-terminus) with EIF2AK2/PKR (via the kinase catalytic domain). In terms of processing, ubiquitinated at Lys-318 by the SCF(FBXL2) complex, leading to its degradation by the proteasome. As to expression, expressed in spleen, thymus, prostate, testis, ovary, small intestine, colon, and peripheral blood.

The protein resides in the cytoplasm. It is found in the cytosol. Adapter protein and signal transducer that links members of the tumor necrosis factor receptor family to different signaling pathways by association with the receptor cytoplasmic domain and kinases. Mediates activation of NF-kappa-B and probably JNK. Seems to be involved in apoptosis. Plays a role in mediating activation of NF-kappa-B by EIF2AK2/PKR. This chain is TNF receptor-associated factor 5 (TRAF5), found in Homo sapiens (Human).